Here is a 404-residue protein sequence, read N- to C-terminus: Probable tRNA sulfurtransferase (404 aa).

The THUMP domain occupies 60-165 (EEVIPKLSKV…KDAAYLSYET (106 aa)). ATP is bound by residues 183–184 (ML), 208–209 (HF), Arg-265, Gly-287, and Gln-296.

Belongs to the ThiI family.

The protein resides in the cytoplasm. The catalysed reaction is [ThiI sulfur-carrier protein]-S-sulfanyl-L-cysteine + a uridine in tRNA + 2 reduced [2Fe-2S]-[ferredoxin] + ATP + H(+) = [ThiI sulfur-carrier protein]-L-cysteine + a 4-thiouridine in tRNA + 2 oxidized [2Fe-2S]-[ferredoxin] + AMP + diphosphate. It catalyses the reaction [ThiS sulfur-carrier protein]-C-terminal Gly-Gly-AMP + S-sulfanyl-L-cysteinyl-[cysteine desulfurase] + AH2 = [ThiS sulfur-carrier protein]-C-terminal-Gly-aminoethanethioate + L-cysteinyl-[cysteine desulfurase] + A + AMP + 2 H(+). It participates in cofactor biosynthesis; thiamine diphosphate biosynthesis. Catalyzes the ATP-dependent transfer of a sulfur to tRNA to produce 4-thiouridine in position 8 of tRNAs, which functions as a near-UV photosensor. Also catalyzes the transfer of sulfur to the sulfur carrier protein ThiS, forming ThiS-thiocarboxylate. This is a step in the synthesis of thiazole, in the thiamine biosynthesis pathway. The sulfur is donated as persulfide by IscS. The sequence is that of Probable tRNA sulfurtransferase from Enterococcus faecalis (strain ATCC 700802 / V583).